The sequence spans 391 residues: Uroporphyrinogen decarboxylase, chloroplastic (391 aa).

Residues 71–75, Phe-90, Ser-120, Asp-121, Tyr-198, Ser-253, and His-368 contribute to the substrate site; that span reads RQAGR.

This sequence belongs to the uroporphyrinogen decarboxylase family. As to quaternary structure, homodimer.

The protein resides in the plastid. It localises to the chloroplast. The catalysed reaction is uroporphyrinogen III + 4 H(+) = coproporphyrinogen III + 4 CO2. It participates in porphyrin-containing compound metabolism; protoporphyrin-IX biosynthesis; coproporphyrinogen-III from 5-aminolevulinate: step 4/4. Its function is as follows. Catalyzes the decarboxylation of four acetate groups of uroporphyrinogen-III to yield coproporphyrinogen-III. This Nicotiana tabacum (Common tobacco) protein is Uroporphyrinogen decarboxylase, chloroplastic (DCUP).